The following is a 707-amino-acid chain: ATP-dependent zinc metalloprotease FtsH (707 aa).

The Cytoplasmic segment spans residues 1 to 25 (MSELDNKKDKSKDSNKKPKKPGAFS). The chain crosses the membrane as a helical span at residues 26–46 (IGNIIIFVIVALLLIWVVFAF). At 47-128 (LPNNPGTNKS…GTTFTGLELA (82 aa)) the chain is on the extracellular side. The chain crosses the membrane as a helical span at residues 129–149 (TLAIANTSASGIGTLNFSGLV). The Cytoplasmic segment spans residues 150 to 707 (TPTNQALAIL…IKTDESLDIK (558 aa)). Position 246–253 (246–253 (GPPGTGKT)) interacts with ATP. His-468 serves as a coordination point for Zn(2+). The active site involves Glu-469. Positions 472 and 546 each coordinate Zn(2+).

It in the central section; belongs to the AAA ATPase family. This sequence in the C-terminal section; belongs to the peptidase M41 family. Homohexamer. Zn(2+) is required as a cofactor.

The protein localises to the cell membrane. In terms of biological role, acts as a processive, ATP-dependent zinc metallopeptidase for both cytoplasmic and membrane proteins. Plays a role in the quality control of integral membrane proteins. The polypeptide is ATP-dependent zinc metalloprotease FtsH (Mycoplasma mobile (strain ATCC 43663 / 163K / NCTC 11711) (Mesomycoplasma mobile)).